A 388-amino-acid polypeptide reads, in one-letter code: Probable ubiquitin-conjugating enzyme E2 L709 (388 aa).

The 160-residue stretch at 3–162 (NVHKRVIKDI…GNDLMVQKLF (160 aa)) folds into the UBC core domain. Residue Cys95 is the Glycyl thioester intermediate of the active site. The interval 195–388 (VEEKSAKTSK…SSKSSKTGKK (194 aa)) is disordered. Composition is skewed to acidic residues over residues 221–238 (SEEEENSDDDNTDSDSES) and 246–297 (DVVD…ESEE). Low complexity predominate over residues 310 to 388 (KTTTKSSSTK…SSKSSKTGKK (79 aa)).

This sequence belongs to the ubiquitin-conjugating enzyme family.

The enzyme catalyses S-ubiquitinyl-[E1 ubiquitin-activating enzyme]-L-cysteine + [E2 ubiquitin-conjugating enzyme]-L-cysteine = [E1 ubiquitin-activating enzyme]-L-cysteine + S-ubiquitinyl-[E2 ubiquitin-conjugating enzyme]-L-cysteine.. Its pathway is protein modification; protein ubiquitination. Functionally, catalyzes the covalent attachment of ubiquitin to other proteins. This is Probable ubiquitin-conjugating enzyme E2 L709 from Acanthamoeba polyphaga (Amoeba).